The primary structure comprises 460 residues: Ammonium transporter Rh type C (460 aa).

The Cytoplasmic portion of the chain corresponds to 1-9; the sequence is MVWNTNLRW. The chain crosses the membrane as a helical span at residues 10-30; that stretch reads RLPVTCLLLQVALVVLFGVFV. Topologically, residues 31–61 are extracellular; the sequence is RYDMDADPHWIDKKEAENSTSDMENEFYYRY. Asn48 carries an N-linked (GlcNAc...) asparagine glycan. A helical transmembrane segment spans residues 62–82; sequence PSFQDVHVMIFVGFGFLMTFL. At 83 to 90 the chain is on the cytoplasmic side; the sequence is QRYGYSSV. A helical membrane pass occupies residues 91 to 111; the sequence is GFNFLLAAFGIQWALLLQGWF. The Extracellular portion of the chain corresponds to 112–125; sequence HSYYRGYIRVGVEN. A helical membrane pass occupies residues 126-145; sequence LINADFCVGSVCVAFGAVLG. Topologically, residues 146 to 151 are cytoplasmic; sequence KVSPVQ. Residues 152–174 traverse the membrane as a helical segment; that stretch reads LLIMTLFQVTLFSVNEFILLNLL. Residues 175 to 179 lie on the Extracellular side of the membrane; it reads EVKDA. The helical transmembrane segment at 180 to 200 threads the bilayer; the sequence is GGSMTIHTFGAYFGLTVTWIL. Residues 201-219 are Cytoplasmic-facing; it reads YRPGLHQSKERQSSVYHSD. Residues 220–240 form a helical membrane-spanning segment; the sequence is LFAMIGTLFLWMYWPSFNSAV. Residues 241–251 are Extracellular-facing; the sequence is SNHGDAQHRAA. The chain crosses the membrane as a helical span at residues 252-272; that stretch reads INTYCSLAACVLTSVALSSAL. At 273 to 285 the chain is on the cytoplasmic side; that stretch reads HKKGKLDMVHIQN. The helical transmembrane segment at 286–306 threads the bilayer; it reads ATLAGGVAVGTAAEMMLMPYG. A topological domain (extracellular) is located at residue Ser307. The helical transmembrane segment at 308-328 threads the bilayer; it reads LIVGFICGIVSTLGFVYLTPF. The Cytoplasmic portion of the chain corresponds to 329–339; that stretch reads LESRLRVQDTC. The chain crosses the membrane as a helical span at residues 340-360; that stretch reads GIHNLHGIPGIIGAIVGAVTA. Residues 361–396 lie on the Extracellular side of the membrane; sequence SCANTDVYGVNGLTQAFGFDGFKTNRTPSMQGKFQA. A helical transmembrane segment spans residues 397-417; sequence AGLFVSLAMALVGGIIVGIIL. The Cytoplasmic portion of the chain corresponds to 418–460; it reads KLPFWGQPADENCFEDAIYWEMPEEPKSTVLHPEDSTLKPSEP.

The protein belongs to the ammonium transporter (TC 2.A.49) family. Rh subfamily. As to quaternary structure, homotrimer. N-glycosylated.

Its subcellular location is the apical cell membrane. It carries out the reaction NH4(+)(in) = NH4(+)(out). The enzyme catalyses methylamine(out) = methylamine(in). The catalysed reaction is CO2(out) = CO2(in). Functionally, ammonium transporter involved in the maintenance of acid-base homeostasis. Transports ammonium and its related derivative methylammonium across the plasma membrane of epithelial cells likely contributing to renal transepithelial ammonia transport and ammonia metabolism. Postulated to primarily mediate an electroneutral bidirectional transport of NH3 ammonia species according to a mechanism that implies interaction of an NH4(+) ion with acidic residues of the pore entry followed by dissociation of NH4(+) into NH3 and H(+). As a result NH3 transits through the central pore and is protonated on the extracellular side reforming NH4(+). May act as a CO2 channel providing for renal acid secretion. This is Ammonium transporter Rh type C (RHCG) from Canis lupus familiaris (Dog).